Reading from the N-terminus, the 397-residue chain is Riboflavin biosynthesis protein RibBA (397 aa).

The tract at residues 1–199 (MFHRIEEALE…IEDLIAYRRH (199 aa)) is DHBP synthase. D-ribulose 5-phosphate-binding positions include 26–27 (RE), Asp31, 138–142 (RAGHT), and Glu162. Glu27 contributes to the Mg(2+) binding site. Residue His141 participates in Mg(2+) binding. The GTP cyclohydrolase II stretch occupies residues 200-397 (HETLVTREVE…VNKLGHLLNL (198 aa)). Residue 250 to 254 (RVHSE) participates in GTP binding. Residues Cys255, Cys266, and Cys268 each coordinate Zn(2+). GTP-binding positions include Gln271, 293-295 (EGR), and Thr315. The Proton acceptor; for GTP cyclohydrolase activity role is filled by Asp327. Arg329 acts as the Nucleophile; for GTP cyclohydrolase activity in catalysis. Positions 350 and 355 each coordinate GTP.

This sequence in the N-terminal section; belongs to the DHBP synthase family. In the C-terminal section; belongs to the GTP cyclohydrolase II family. The cofactor is Mg(2+). It depends on Mn(2+) as a cofactor. Requires Zn(2+) as cofactor.

The catalysed reaction is D-ribulose 5-phosphate = (2S)-2-hydroxy-3-oxobutyl phosphate + formate + H(+). It carries out the reaction GTP + 4 H2O = 2,5-diamino-6-hydroxy-4-(5-phosphoribosylamino)-pyrimidine + formate + 2 phosphate + 3 H(+). Its pathway is cofactor biosynthesis; riboflavin biosynthesis; 2-hydroxy-3-oxobutyl phosphate from D-ribulose 5-phosphate: step 1/1. It functions in the pathway cofactor biosynthesis; riboflavin biosynthesis; 5-amino-6-(D-ribitylamino)uracil from GTP: step 1/4. Catalyzes the conversion of D-ribulose 5-phosphate to formate and 3,4-dihydroxy-2-butanone 4-phosphate. In terms of biological role, catalyzes the conversion of GTP to 2,5-diamino-6-ribosylamino-4(3H)-pyrimidinone 5'-phosphate (DARP), formate and pyrophosphate. The chain is Riboflavin biosynthesis protein RibBA from Bacillus cereus (strain AH187).